The following is a 138-amino-acid chain: Protein FAM136A (138 aa).

The residue at position 2 (Ala-2) is an N-acetylalanine. A phosphothreonine mark is found at Thr-124 and Thr-126.

Belongs to the FAM136 family.

The polypeptide is Protein FAM136A (FAM136A) (Bos taurus (Bovine)).